Consider the following 1237-residue polypeptide: Anion exchange protein 2 (1237 aa).

A disordered region spans residues 1 to 238 (MSSAPRRPAS…YNLQERRRIG (238 aa)). The Cytoplasmic segment spans residues 1–703 (MSSAPRRPAS…SDFRDALDPQ (703 aa)). 2 stretches are compositionally biased toward basic and acidic residues: residues 38–48 (LRTLGVERFEE) and 57–74 (GGEEPGRSYGEEDFEYHR). Basic residues-rich tracts occupy residues 75-84 (QSSHHIHHPL) and 93-109 (RRRKTPQGPGRKPRRRP). S112, S131, S144, S170, S172, and S239 each carry phosphoserine. Over residues 119–132 (TIEEGEEDEEEASE) the composition is skewed to acidic residues. A Phosphothreonine modification is found at T253. The residue at position 270 (K270) is an N6-methyllysine. Residues 285-316 (VRKNAKGSTQAAREGREPGPTPRARPRAPHKP) form a disordered region. S439 carries the post-translational modification Phosphoserine. The segment at 445 to 466 (SLLGHHHAQGTESDPHVTEPLI) is disordered. Transmembrane regions (helical) follow at residues 704-727 (CLAAVIFIYFAALSPAITFGGLLG), 733-770 (LIGVSELIMSTALQGVVFCLLGAQPLLVIGFSGPLLVF), 790-812 (VWIGFWLVFLALLMVALEGSFLV), and 822-843 (IFAFLISLIFIYETFYKLIKIF). Residues 704–1237 (CLAAVIFIYF…DEYNEMPMPV (534 aa)) form a membrane (anion exchange) region. Topologically, residues 844–896 (QEHPLHGCSGSNDSEAGSSSSSNMTWATTILVPDNSSASGQSGQEKPRGQPNT) are extracellular. 3 N-linked (GlcNAc...) asparagine glycosylation sites follow: N855, N866, and N878. A helical transmembrane segment spans residues 897–914 (ALLSLVLMAGTFFIAFFL). Topologically, residues 915–929 (RKFKNSRFFPGRIRR) are cytoplasmic. 5 consecutive transmembrane segments (helical) span residues 930-950 (VIGDFGVPIAILIMVLVDYSI), 984-1006 (PFPVWMMVASLLPAVLVFILIFM), 1032-1053 (LLLIVAMGGICALFGLPWLAAA), 1087-1132 (VTGL…IQFY), and 1159-1195 (MHLFTALQLLCLALLWAVMSTAASLAFPFILILTVPL). C1169 carries the S-palmitoyl cysteine lipid modification.

This sequence belongs to the anion exchanger (TC 2.A.31) family. Expressed in the choroid plexus epithelium (at protein level). Expressed in the parotid gland and sublingual salivary gland acinar cells (at protein level). In terms of tissue distribution, widely expressed at similar levels in all tissues examined. Expressed in the testis. As to expression, predominantly expressed in stomach although they are also detected at lower levels in other tissues. Expressed in the testis. Stomach-specific. In terms of tissue distribution, expressed at slightly higher levels in lung and stomach than in other tissues.

It localises to the apical cell membrane. Its subcellular location is the basolateral cell membrane. It carries out the reaction hydrogencarbonate(in) + chloride(out) = hydrogencarbonate(out) + chloride(in). Inhibited by 4,4'-diisothiocyanatostilbene-2,2'-disulfonic acid (DIDS) and acetazolamide. Muscarinic receptor stimulation enhances activity through a Ca(2+)-dependent mechanism. Its function is as follows. Sodium-independent anion exchanger which mediates the electroneutral exchange of chloride for bicarbonate ions across the cell membrane. Plays an important role in osteoclast differentiation and function. Regulates bone resorption and calpain-dependent actin cytoskeleton organization in osteoclasts via anion exchange-dependent control of pH. Essential for intracellular pH regulation in CD8(+) T-cells upon CD3 stimulation, modulating CD8(+) T-cell responses. Plays a critical role in male fertility and spermiogenesis. In Mus musculus (Mouse), this protein is Anion exchange protein 2 (Slc4a2).